We begin with the raw amino-acid sequence, 2031 residues long: Pericentriolar material 1 protein (2031 aa).

2 disordered regions span residues 1–82 and 111–165; these read MATG…HTFP and DQRS…STRS. The self-association stretch occupies residues 1–484; that stretch reads MATGGGPPDE…RSTEQRTLGS (484 aa). A compositionally biased stretch (basic and acidic residues) spans 42–58; sequence RSAEKNKKKFVECDLRL. The segment covering 114 to 130 has biased composition (polar residues); it reads SIGSDSQGRATAANNKR. Residues 149 to 162 are compositionally biased toward basic and acidic residues; that stretch reads NKEKSKSPPKREAS. The stretch at 302-394 forms a coiled coil; that stretch reads RQEAKEELKN…FHNQLHDSED (93 aa). Over residues 469–494 the composition is skewed to polar residues; sequence SSVSPRRSTEQRTLGSAVSSALTSDN. The interval 469–495 is disordered; that stretch reads SSVSPRRSTEQRTLGSAVSSALTSDNR. The stretch at 523 to 549 forms a coiled coil; sequence AEKLKKLKEVRKRLNELRELVHYYEQT. Disordered regions lie at residues 550–590 and 649–678; these read SDMM…NPQY and KEED…NSVA. The span at 562–580 shows a compositional bias: acidic residues; the sequence is KDEDETEDSEYDSEQEDAE. Polar residues-rich tracts occupy residues 581–590 and 667–677; these read PTTNIRNPQY and SRASLSSQNSV. Residues 684-711 adopt a coiled-coil conformation; sequence VDFEQKFNRLVAAKQKLKQLQDLVAMYG. Positions 712 to 752 are disordered; it reads DDSESEPVAPERSFSGDQFPPEATTLKQQPNNTRPNVSKAQ. The segment covering 736–750 has biased composition (polar residues); the sequence is TLKQQPNNTRPNVSK. Residues 745-1271 are self-association and localization to centrosomes; sequence RPNVSKAQKD…PACFGAGLSA (527 aa). Positions 757-805 form a coiled coil; the sequence is LKEQAREKFYESKLQQQQRELSQLQEERKKLIEIQEKIQTLRKACPDLQ. Polar residues-rich tracts occupy residues 806 to 823 and 888 to 898; these read LSTS…NRQM and QGNTETTSAAS. Disordered regions lie at residues 806–835 and 882–1014; these read LSTS…VNTN and AEHQ…VSMR. Positions 858 to 892 form a coiled coil; the sequence is SEIRKHQILREDLRQRRKQLETLMAEHQRRQGNTE. Over residues 930–945 the composition is skewed to acidic residues; sequence LEEEEEEEEVDDEECL. Polar residues-rich tracts occupy residues 960 to 981 and 1004 to 1013; these read NTSC…FNGR and KTRQQQNVSM. The stretch at 1025–1049 forms a coiled coil; the sequence is LSHVEEKEHWQEQIDQIKKQLDYST. Disordered stretches follow at residues 1123–1146, 1219–1247, 1318–1345, and 1514–1533; these read QHLQ…TSPN, KPFE…QGRR, SAQA…QKSK, and PVCQ…LSTS. 2 stretches are compositionally biased toward basic and acidic residues: residues 1127 to 1136 and 1221 to 1247; these read GESHQREDRG and FESH…QGRR. The span at 1331–1345 shows a compositional bias: basic residues; it reads KAKNKKRKVFHQKSK. The segment covering 1524-1533 has biased composition (polar residues); sequence GDNISSLSTS. The stretch at 1550–1599 forms a coiled coil; it reads HFDQALARMREYERMKSETENGLVADCCNNLNAAASSLEGTNDEARGRAQ. Disordered stretches follow at residues 1746-1802, 1817-1870, 1922-1965, and 2007-2031; these read ADKE…DLDE, ALTN…EANI, NNVK…DEDD, and ENGA…IHPA. Positions 1771 to 1784 are enriched in basic and acidic residues; the sequence is KDETETAEENRNFD. Acidic residues predominate over residues 1824 to 1835; it reads GEDENEDEENYE. Composition is skewed to polar residues over residues 1843–1852 and 1922–1942; these read VQTSLETSSE and NNVK…SDTE.

The protein belongs to the PCM1 family. Self-associates. Interacts with cetn3.

The protein resides in the cytoplasm. It localises to the cytoskeleton. Its subcellular location is the microtubule organizing center. The protein localises to the centrosome. It is found in the cytoplasmic granule. The protein resides in the centriolar satellite. It localises to the cilium basal body. In terms of biological role, required to anchor microtubules to the centrosome. Required for centrosome assembly and function. Essential for the correct localization of several centrosomal proteins including cetn3 and pcnt. Probably involved in the biogenesis of cilia. This chain is Pericentriolar material 1 protein (pcm1), found in Xenopus laevis (African clawed frog).